A 339-amino-acid polypeptide reads, in one-letter code: D-erythrose-4-phosphate dehydrogenase (339 aa).

11–12 (RI) contacts NAD(+). Substrate contacts are provided by residues 158–160 (SCT), Arg204, 217–218 (TK), and Arg240. Catalysis depends on Cys159, which acts as the Nucleophile. Asn322 contributes to the NAD(+) binding site.

This sequence belongs to the glyceraldehyde-3-phosphate dehydrogenase family. Epd subfamily. As to quaternary structure, homotetramer.

It is found in the cytoplasm. The enzyme catalyses D-erythrose 4-phosphate + NAD(+) + H2O = 4-phospho-D-erythronate + NADH + 2 H(+). It functions in the pathway cofactor biosynthesis; pyridoxine 5'-phosphate biosynthesis; pyridoxine 5'-phosphate from D-erythrose 4-phosphate: step 1/5. Functionally, catalyzes the NAD-dependent conversion of D-erythrose 4-phosphate to 4-phosphoerythronate. The chain is D-erythrose-4-phosphate dehydrogenase from Aliivibrio salmonicida (strain LFI1238) (Vibrio salmonicida (strain LFI1238)).